Reading from the N-terminus, the 647-residue chain is Threonine--tRNA ligase (647 aa).

One can recognise a TGS domain in the interval 1–63; that stretch reads MEVRVEGQMV…PAGCTGIEPV (63 aa). Positions 244–535 are catalytic; it reads DHRKLGRELS…LVENFAGALP (292 aa). Zn(2+)-binding residues include C336, H387, and H512.

Belongs to the class-II aminoacyl-tRNA synthetase family. As to quaternary structure, homodimer. Zn(2+) serves as cofactor.

It is found in the cytoplasm. The catalysed reaction is tRNA(Thr) + L-threonine + ATP = L-threonyl-tRNA(Thr) + AMP + diphosphate + H(+). Functionally, catalyzes the attachment of threonine to tRNA(Thr) in a two-step reaction: L-threonine is first activated by ATP to form Thr-AMP and then transferred to the acceptor end of tRNA(Thr). Also edits incorrectly charged L-seryl-tRNA(Thr). This Desulfovibrio desulfuricans (strain ATCC 27774 / DSM 6949 / MB) protein is Threonine--tRNA ligase.